The sequence spans 945 residues: Poly [ADP-ribose] polymerase 1 (945 aa).

The PARP-type 1 zinc finger occupies 10 to 96; the sequence is YAIEYAKSGR…KLRQEIQHFK (87 aa). Zn(2+) is bound by residues Cys-22, Cys-25, His-54, and Cys-57. The segment at 117–183 adopts a PARP-type 2; degenerate zinc-finger fold; sequence IKTEKSLSNR…DYEENFKIKA (67 aa). A disordered region spans residues 195–251; sequence RRSTEPATPASASPTPPEAETPVLSAEGSPESSNKRPASSEIIEIDGEGNPDENDFA. Over residues 237–248 the composition is skewed to acidic residues; the sequence is IEIDGEGNPDEN. In terms of domain architecture, PADR1 zinc-binding spans 258–397; the sequence is KEARLMEVQK…NQMSERLYIG (140 aa). Residues 324–369 form a zinc ribbon region; that stretch reads GCPIICQTCSNGKIVYNSSCRTYVCTGYATEYSKCTYESKNPIRTP. Zn(2+) contacts are provided by Cys-329, Cys-332, Cys-348, and Cys-358. The 100-residue stretch at 464-563 folds into the WGR domain; the sequence is RCHVFKNEID…KHFRKMPGMF (100 aa). The region spanning 586–704 is the PARP alpha-helical domain; that stretch reads KTLLPKSVKE…DIKFAYDQIS (119 aa). In terms of domain architecture, PARP catalytic spans 717–945; the sequence is DPVDINYQKL…RVKMHHARHL (229 aa).

This sequence belongs to the ARTD/PARP family.

It is found in the nucleus. The catalysed reaction is NAD(+) + (ADP-D-ribosyl)n-acceptor = nicotinamide + (ADP-D-ribosyl)n+1-acceptor + H(+).. It carries out the reaction L-aspartyl-[protein] + NAD(+) = 4-O-(ADP-D-ribosyl)-L-aspartyl-[protein] + nicotinamide. It catalyses the reaction L-glutamyl-[protein] + NAD(+) = 5-O-(ADP-D-ribosyl)-L-glutamyl-[protein] + nicotinamide. With respect to regulation, inhibited by N-(6-oxo-5,6-dihydrophenanthridin-2-yl)-N,N-dimethylacetamide HCl (PJ34), 1,5-dihydroxyisoquinoline (DHQ) and 3-aminobenzamide (3AB). Functionally, poly[ADP-ribose] polymerase modifies various nuclear proteins by poly(ADP-ribosyl)ation, a post-translational modification synthesized after DNA damage that appears as an obligatory step in a detection/signaling pathway leading to the reparation of DNA strand breaks and programmed cell death. Involved in protection of the genome against mutations. This chain is Poly [ADP-ribose] polymerase 1, found in Caenorhabditis elegans.